The primary structure comprises 1216 residues: ATP-dependent DNA helicase Q4 (1216 aa).

2 disordered regions span residues 72–100 (EAQE…QSLL) and 113–171 (NLKN…PRLG). 2 stretches are compositionally biased toward polar residues: residues 86-100 (AATQ…QSLL) and 114-137 (LKNT…SLST). Residues serine 179 and serine 181 each carry the phosphoserine modification. The disordered stretch occupies residues 235–340 (SEVSVQSPEA…LHASPRPASL (106 aa)). 2 stretches are compositionally biased toward polar residues: residues 248 to 262 (QPAQ…SINS) and 306 to 320 (TQVN…SNQA). The CCHC-type zinc-finger motif lies at 393-410 (DTCFRCGQFGHWASQCSQ). A disordered region spans residues 436-458 (AQRTGTASCHHSGEETQPAAPEL). One can recognise a Helicase ATP-binding domain in the interval 506 to 684 (IMRILSGIST…AQHLGIAGEF (179 aa)). 519-526 (LPTGAGKS) is an ATP binding site. A DEAH box motif is present at residues 627-630 (DEVH). In terms of domain architecture, Helicase C-terminal spans 705 to 872 (DSDQALVTLL…AVKRLVQRVF (168 aa)). Residues cysteine 875, cysteine 877, cysteine 906, and histidine 909 each coordinate Zn(2+).

It belongs to the helicase family. RecQ subfamily. In terms of assembly, interacts with UBR1 and UBR2. Interacts with MCM10; this interaction regulates RECQL4 unwinding activity. Interacts with TOPBP1. Zn(2+) serves as cofactor.

The protein resides in the cytoplasm. The protein localises to the nucleus. It carries out the reaction Couples ATP hydrolysis with the unwinding of duplex DNA by translocating in the 3'-5' direction.. The catalysed reaction is ATP + H2O = ADP + phosphate + H(+). An ATP-dependent DNA helicase which unwinds dsDNA with a 3'-overhang in a 3'-5' direction. May play a role in development of the palate and the limbs. May modulate chromosome segregation. This Mus musculus (Mouse) protein is ATP-dependent DNA helicase Q4 (Recql4).